The following is a 945-amino-acid chain: Nonsense-mediated mRNA decay factor SMG8 (945 aa).

Disordered regions lie at residues arginine 563–glutamate 604 and alanine 633–alanine 671.

It belongs to the SMG8 family.

Involved in nonsense-mediated decay (NMD) of mRNAs containing premature stop codons. Probable component of kinase complex containing nonC and recruited to stalled ribosomes. This Drosophila grimshawi (Hawaiian fruit fly) protein is Nonsense-mediated mRNA decay factor SMG8.